The primary structure comprises 418 residues: Peptide chain release factor subunit 1 (418 aa).

Belongs to the eukaryotic release factor 1 family. Heterodimer of two subunits, one of which binds GTP.

The protein localises to the cytoplasm. Functionally, directs the termination of nascent peptide synthesis (translation) in response to the termination codons UAA, UAG and UGA. The chain is Peptide chain release factor subunit 1 from Haloarcula marismortui (strain ATCC 43049 / DSM 3752 / JCM 8966 / VKM B-1809) (Halobacterium marismortui).